Here is a 103-residue protein sequence, read N- to C-terminus: Small ribosomal subunit protein uS10 (103 aa).

It belongs to the universal ribosomal protein uS10 family. As to quaternary structure, part of the 30S ribosomal subunit.

In terms of biological role, involved in the binding of tRNA to the ribosomes. The protein is Small ribosomal subunit protein uS10 of Xylella fastidiosa (strain M12).